The primary structure comprises 488 residues: Probable glycine dehydrogenase (decarboxylating) subunit 2 (488 aa).

Lys-274 bears the N6-(pyridoxal phosphate)lysine mark.

It belongs to the GcvP family. C-terminal subunit subfamily. The glycine cleavage system is composed of four proteins: P, T, L and H. In this organism, the P 'protein' is a heterodimer of two subunits. Pyridoxal 5'-phosphate is required as a cofactor.

It carries out the reaction N(6)-[(R)-lipoyl]-L-lysyl-[glycine-cleavage complex H protein] + glycine + H(+) = N(6)-[(R)-S(8)-aminomethyldihydrolipoyl]-L-lysyl-[glycine-cleavage complex H protein] + CO2. Its function is as follows. The glycine cleavage system catalyzes the degradation of glycine. The P protein binds the alpha-amino group of glycine through its pyridoxal phosphate cofactor; CO(2) is released and the remaining methylamine moiety is then transferred to the lipoamide cofactor of the H protein. The polypeptide is Probable glycine dehydrogenase (decarboxylating) subunit 2 (Listeria monocytogenes serotype 4a (strain HCC23)).